The primary structure comprises 145 residues: D-aminoacyl-tRNA deacylase (145 aa).

The short motif at 137 to 138 (GP) is the Gly-cisPro motif, important for rejection of L-amino acids element.

Belongs to the DTD family. Homodimer.

The protein localises to the cytoplasm. The enzyme catalyses glycyl-tRNA(Ala) + H2O = tRNA(Ala) + glycine + H(+). It carries out the reaction a D-aminoacyl-tRNA + H2O = a tRNA + a D-alpha-amino acid + H(+). Functionally, an aminoacyl-tRNA editing enzyme that deacylates mischarged D-aminoacyl-tRNAs. Also deacylates mischarged glycyl-tRNA(Ala), protecting cells against glycine mischarging by AlaRS. Acts via tRNA-based rather than protein-based catalysis; rejects L-amino acids rather than detecting D-amino acids in the active site. By recycling D-aminoacyl-tRNA to D-amino acids and free tRNA molecules, this enzyme counteracts the toxicity associated with the formation of D-aminoacyl-tRNA entities in vivo and helps enforce protein L-homochirality. This chain is D-aminoacyl-tRNA deacylase, found in Legionella pneumophila (strain Lens).